The sequence spans 485 residues: Anthranilate synthase component I-like protein (485 aa).

L-tryptophan is bound by residues Ser69 and 271–273 (PFA). Residue 306–307 (GT) participates in chorismate binding. Position 333 (Glu333) interacts with Mg(2+). Residues Arg441, 455–457 (GAG), and Gly457 each bind chorismate. Glu470 lines the Mg(2+) pocket.

It belongs to the anthranilate synthase component I family. In terms of assembly, tetramer of two components I and two components II. Requires Mg(2+) as cofactor.

The enzyme catalyses chorismate + L-glutamine = anthranilate + pyruvate + L-glutamate + H(+). It functions in the pathway amino-acid biosynthesis; L-tryptophan biosynthesis; L-tryptophan from chorismate: step 1/5. The chain is Anthranilate synthase component I-like protein (trpE2) from Synechocystis sp. (strain ATCC 27184 / PCC 6803 / Kazusa).